Here is a 469-residue protein sequence, read N- to C-terminus: Glutamine synthetase (469 aa).

Residues 15 to 96 (EDVKFVDVRF…INFFIHDPIT (82 aa)) enclose the GS beta-grasp domain. Positions 104 to 469 (PRNVAKKAEA…PHEFEMYFDV (366 aa)) constitute a GS catalytic domain. Glu129 and Glu131 together coordinate Mg(2+). Glu205 lines the ATP pocket. Mg(2+) contacts are provided by Glu210 and Glu218. An ATP-binding site is contributed by 221–223 (YKF). L-glutamate-binding positions include 262-263 (NG) and Gly263. His267 contacts Mg(2+). ATP is bound by residues 269-271 (HQS) and Ser271. Residues Arg320, Glu326, and Arg338 each coordinate L-glutamate. Residues Arg338, Arg343, and Lys352 each coordinate ATP. A Mg(2+)-binding site is contributed by Glu357. An L-glutamate-binding site is contributed by Arg359. Tyr397 carries the post-translational modification O-AMP-tyrosine.

It belongs to the glutamine synthetase family. As to quaternary structure, oligomer of 12 subunits arranged in the form of two hexagons. Mg(2+) serves as cofactor.

The protein resides in the cytoplasm. The catalysed reaction is L-glutamate + NH4(+) + ATP = L-glutamine + ADP + phosphate + H(+). Its activity is regulated as follows. The activity of this enzyme could be controlled by adenylation under conditions of abundant glutamine. In terms of biological role, catalyzes the ATP-dependent biosynthesis of glutamine from glutamate and ammonia. Complements L-glutamine auxotrophy of an E.coli glnA mutant. The protein is Glutamine synthetase of Streptomyces coelicolor (strain ATCC BAA-471 / A3(2) / M145).